The following is a 194-amino-acid chain: Type II methyltransferase M.MjaVI (194 aa).

The protein belongs to the N(4)/N(6)-methyltransferase family. N(4) subfamily.

It catalyses the reaction a 2'-deoxycytidine in DNA + S-adenosyl-L-methionine = an N(4)-methyl-2'-deoxycytidine in DNA + S-adenosyl-L-homocysteine + H(+). A beta subtype methylase that recognizes the double-stranded sequence 5'-CCGG-3', methylates C-1 on both strands, and protects the DNA from cleavage by the MjaVI endonuclease. The protein is Type II methyltransferase M.MjaVI (mjaVIM) of Methanocaldococcus jannaschii (strain ATCC 43067 / DSM 2661 / JAL-1 / JCM 10045 / NBRC 100440) (Methanococcus jannaschii).